Here is a 703-residue protein sequence, read N- to C-terminus: Harmonin-binding protein USHBP1 (703 aa).

Residues 1–15 (MSARATRPRSRRGRH) show a composition bias toward basic residues. 2 disordered regions span residues 1-113 (MSAR…PPGN) and 138-172 (HQPP…CQRE). Positions 189–227 (SREDELVRTQASLEAIRAEKETLQKEVQELQDSLLRLEP) form a coiled coil. Positions 228-256 (CPHLSHNQAGGSGSGSSSSEADREPWETQ) are disordered. The stretch at 289-309 (EMHIMEAQMEQLRGSIEKLKC) forms a coiled coil. The interval 396–416 (MDAGAQQNPQPSPEGSSVDKP) is disordered. The segment covering 400 to 410 (AQQNPQPSPEG) has biased composition (polar residues). A coiled-coil region spans residues 476–513 (RLEKTQIQQDLVAAREALADLMLRLQLVRREKRGLELR). Residues 540-583 (AGGANSSGGHSSGGGSSGDEEEWYQGLPAVPGGTSGIDGGQVGR) are disordered. Positions 572–581 (GTSGIDGGQV) are enriched in gly residues. Residues 596-681 (ASLTRTLDLQ…QAEEVAVLEA (86 aa)) adopt a coiled-coil conformation.

The protein belongs to the MCC family. Interacts via its C-terminus with the first PDZ domain of USH1C. Highest level of expression in heart, and moderate to low expression in skeletal muscle, kidney, liver, small intestine, placenta and lung.

This is Harmonin-binding protein USHBP1 from Homo sapiens (Human).